A 312-amino-acid polypeptide reads, in one-letter code: MFFHKKRNVNGFLLLDKPKGMTSNNVLQKVKIIFKAKKAGYIGTLDPLATGILPICFGEATKFSNYLNASDKHYNVIARLGEKTSTSDSDGIIVRKRPILFTPIQLSLALKALTGSVNQIPSMYSAVKYKGIPLYKYARQGINVKRNIRCVFIYKIDLVDQKDNWIELNVHCSKGTYIRTLIEDLGEKLFCGAHVIRLRRLKIGLLSYSKLVKLSFLENLLNEKNVVKINFFKKIDDLLMPVDTPVYFLPKIYISIEKLSVFRLGQKVNFSSSITNGLVRVFEKDNNTFIGLGKINSEKTLIPYRLVSMLTN.

Residue D46 is the Nucleophile of the active site. Substrate is bound by residues Y74, Y177, and L198.

It belongs to the pseudouridine synthase TruB family. Type 1 subfamily.

The catalysed reaction is uridine(55) in tRNA = pseudouridine(55) in tRNA. Its function is as follows. Responsible for synthesis of pseudouridine from uracil-55 in the psi GC loop of transfer RNAs. The polypeptide is tRNA pseudouridine synthase B (Buchnera aphidicola subsp. Schizaphis graminum (strain Sg)).